Here is a 388-residue protein sequence, read N- to C-terminus: Single-stranded DNA-binding protein 3 (388 aa).

Residue M1 is modified to N-acetylmethionine. Positions 16–48 constitute a LisH domain; it reads AREKLALYVYEYLLHVGAQKSAQTFLSEIRWEK. The tract at residues 101–388 is disordered; it reads VLGNIPPNDG…NYSPSMTMSV (288 aa). Residues 126–139 are compositionally biased toward pro residues; that stretch reads GSQPSPHAQPPPHN. 3 positions are modified to asymmetric dimethylarginine: R155, R161, and R165. Low complexity-rich tracts occupy residues 200–209 and 250–268; these read MQRMNPPRGM and PNSANSIPYSSSSPGTYVG. Residues 272–282 are compositionally biased toward pro residues; the sequence is GGGPPGTPIMP. Residues 285-296 show a composition bias toward polar residues; that stretch reads ADSTNSSDNIYT. A compositionally biased stretch (gly residues) spans 315 to 325; the sequence is GSDGPMGGMGG. Over residues 346–357 the composition is skewed to low complexity; it reads NSPNNISGISNP. Phosphoserine is present on residues S347, S352, and S355. T360 is modified (phosphothreonine). The segment covering 373–388 has biased composition (polar residues); the sequence is HSFQNDNYSPSMTMSV. A phosphoserine mark is found at S381 and S387.

As to expression, highly expressed in all hematopoietic tissues, including spleen, lymph node, peripheral blood, bone marrow, thymus, and fetal liver, with highest expression in thymus and fetal liver. Expression is also high in heart, brain, kidney, and skeletal muscle.

The protein localises to the nucleus. Functionally, may be involved in transcription regulation of the alpha 2(I) collagen gene where it binds to the single-stranded polypyrimidine sequences in the promoter region. The protein is Single-stranded DNA-binding protein 3 (SSBP3) of Homo sapiens (Human).